The chain runs to 468 residues: Tissue alpha-L-fucosidase (468 aa).

The first 22 residues, 1 to 22, serve as a signal peptide directing secretion; it reads MRSWVVGARLLLLLQLVLVLGA. Thr173 is subject to Phosphothreonine. N-linked (GlcNAc...) asparagine glycans are attached at residues Asn244, Asn271, and Asn320.

The protein belongs to the glycosyl hydrolase 29 family. In terms of assembly, homotetramer.

It localises to the lysosome. It carries out the reaction an alpha-L-fucoside + H2O = L-fucose + an alcohol. It catalyses the reaction a neolactoside IV(2)-alpha-Fuc-nLc4Cer(d18:1(4E)) + H2O = a neolactoside nLc4Cer(d18:1(4E)) + L-fucose. The enzyme catalyses a neolactoside IV(2)-alpha-Fuc-nLc4Cer(d18:0) + H2O = a neolactoside nLc4Cer(d18:0) + L-fucose. Alpha-L-fucosidase is responsible for hydrolyzing the alpha-1,6-linked fucose joined to the reducing-end N-acetylglucosamine of the carbohydrate moieties of glycoproteins. The chain is Tissue alpha-L-fucosidase (FUCA1) from Bos taurus (Bovine).